The sequence spans 262 residues: tRNA pseudouridine synthase A (262 aa).

Aspartate 51 functions as the Nucleophile in the catalytic mechanism. Tyrosine 109 contributes to the substrate binding site.

This sequence belongs to the tRNA pseudouridine synthase TruA family. Homodimer.

It catalyses the reaction uridine(38/39/40) in tRNA = pseudouridine(38/39/40) in tRNA. Formation of pseudouridine at positions 38, 39 and 40 in the anticodon stem and loop of transfer RNAs. The chain is tRNA pseudouridine synthase A from Actinobacillus pleuropneumoniae serotype 7 (strain AP76).